Here is a 539-residue protein sequence, read N- to C-terminus: MKKNYLLLYFIFLLCGSIAAQDWNGIPVPANPGNGMTWQLQDNVSDSFNYTSSEGNRPTAFTSKWKPSYINGWTGPGSTIFNAPQAWTNGSQLAIQAQPAGNGKSYNGIITSKNKIQYPVYMEIKAKIMDQVLANAFWTLTDDETQEIDIMEGYGSDRGGTWFAQRMHLSHHTFIRNPFTDYQPMGDATWYYNGGTPWRSAYHRYGCYWKDPFTLEYYIDGVKVRTVTRAEIDPNNHLGGTGLNQATNIIIDCENQTDWRPAATQEELADDSKNIFWVDWIRVYKPVAVSGGGNNGNDGATEFQYDLGTDTSAVWPGYTRVSNTTRAGNFGWANTNDIGSRDRGASNGRNNINRDINFSSQTRFFTQDLSNGTYNVLITFGDTYARKNMNVAAEGQNKLTNINTNAGQYVSRSFDVNVNDGKLDLRFSVGNGGDVWSITRIWIRKVTSNSANLLAAKGLTLEDPVETTEFLYPNPAKTDDFVTVPNSEIGSSIIIYNSAGQVVKKVSVVSENQKISLEGFAKGMYFINLNGQSTKLIVQ.

The first 19 residues, 1–19 (MKKNYLLLYFIFLLCGSIA), serve as a signal peptide directing secretion. In terms of domain architecture, GH16 spans 21–289 (QDWNGIPVPA…WIRVYKPVAV (269 aa)). Substrate contacts are provided by residues Trp73, 82 to 92 (NAPQAWTNGSQ), 96 to 98 (QAQ), and Glu144. The active-site Nucleophile is the Glu147. Catalysis depends on Glu152, which acts as the Proton donor. 2 residues coordinate substrate: Arg176 and Asp271. The interval 332–353 (WANTNDIGSRDRGASNGRNNIN) is disordered.

This sequence belongs to the glycosyl hydrolase 16 family. Monomer. Post-translationally, proteolytically cleaved into mature beta-agarase A catalytic chain (AgaAc).

Its subcellular location is the secreted. The enzyme catalyses Hydrolysis of (1-&gt;4)-beta-D-galactosidic linkages in agarose, giving the tetramer as the predominant product.. Cleaves the beta-1,4-linkages between beta-D-galactose and alpha-L-3,6-anhydro-galactose residues in agarose. Cleaves agarose in a random manner with retention of the anomeric-bond configuration, producing beta-anomers that give rise progressively to alpha-anomers when mutarotation takes place. The polypeptide is Beta-agarase A (agaA) (Zobellia galactanivorans (strain DSM 12802 / CCUG 47099 / CIP 106680 / NCIMB 13871 / Dsij)).